Consider the following 238-residue polypeptide: Ribonuclease PH (238 aa).

Phosphate contacts are provided by residues arginine 86 and 124 to 126 (GTR).

This sequence belongs to the RNase PH family. In terms of assembly, homohexameric ring arranged as a trimer of dimers.

It carries out the reaction tRNA(n+1) + phosphate = tRNA(n) + a ribonucleoside 5'-diphosphate. Its function is as follows. Phosphorolytic 3'-5' exoribonuclease that plays an important role in tRNA 3'-end maturation. Removes nucleotide residues following the 3'-CCA terminus of tRNAs; can also add nucleotides to the ends of RNA molecules by using nucleoside diphosphates as substrates, but this may not be physiologically important. Probably plays a role in initiation of 16S rRNA degradation (leading to ribosome degradation) during starvation. This chain is Ribonuclease PH, found in Trichlorobacter lovleyi (strain ATCC BAA-1151 / DSM 17278 / SZ) (Geobacter lovleyi).